We begin with the raw amino-acid sequence, 332 residues long: Olfactory receptor 10G6 (332 aa).

The Extracellular segment spans residues 1-46 (MLEGVEHLLLLLLLTDVNSKELQSGNQTSVSHFILVGLHHPPQLGA). An N-linked (GlcNAc...) asparagine glycan is attached at asparagine 26. A helical membrane pass occupies residues 47–67 (PLFLAFLVIYLLTVSGNGLII). At 68 to 75 (LTVLVDIR) the chain is on the cytoplasmic side. The helical transmembrane segment at 76–96 (LHRPMCLFLCHLSFLDMTISC) threads the bilayer. Residues 97–120 (AIVPKMLAGFLLGSRIISFGGCVI) are Extracellular-facing. A disulfide bridge links cysteine 118 with cysteine 210. Residues 121-141 (QLFSFHFLGCTECFLYTLMAY) form a helical membrane-spanning segment. The Cytoplasmic portion of the chain corresponds to 142-160 (DRFLAICKPLHYATIMTHR). Residues 161 to 181 (VCNSLALGTWLGGTIHSLFQT) form a helical membrane-spanning segment. Topologically, residues 182 to 218 (SFVFRLPFCGPNRVDYIFCDIPAMLRLACADTAINEL) are extracellular. The chain crosses the membrane as a helical span at residues 219–238 (VTFADIGFLALTCFMLILTS). The Cytoplasmic portion of the chain corresponds to 239–258 (YGYIVAAILRIPSADGRRNA). Residues 259–279 (FSTCAAHLTVVIVYYVPCTFI) form a helical membrane-spanning segment. The Extracellular portion of the chain corresponds to 280–290 (YLRPCSQEPLD). A helical membrane pass occupies residues 291 to 311 (GVVAVFYTVITPLLNSIIYTL). The Cytoplasmic portion of the chain corresponds to 312-332 (CNKEMKAALQRLGGHKEVQPH).

It belongs to the G-protein coupled receptor 1 family.

The protein resides in the cell membrane. In terms of biological role, odorant receptor. The chain is Olfactory receptor 10G6 (OR10G6) from Homo sapiens (Human).